A 498-amino-acid chain; its full sequence is Probable cytosol aminopeptidase (498 aa).

Positions 271 and 276 each coordinate Mn(2+). Residue lysine 283 is part of the active site. The Mn(2+) site is built by aspartate 294, aspartate 353, and glutamate 355. The active site involves arginine 357.

Belongs to the peptidase M17 family. Mn(2+) serves as cofactor.

It is found in the cytoplasm. It carries out the reaction Release of an N-terminal amino acid, Xaa-|-Yaa-, in which Xaa is preferably Leu, but may be other amino acids including Pro although not Arg or Lys, and Yaa may be Pro. Amino acid amides and methyl esters are also readily hydrolyzed, but rates on arylamides are exceedingly low.. The catalysed reaction is Release of an N-terminal amino acid, preferentially leucine, but not glutamic or aspartic acids.. Its function is as follows. Presumably involved in the processing and regular turnover of intracellular proteins. Catalyzes the removal of unsubstituted N-terminal amino acids from various peptides. The polypeptide is Probable cytosol aminopeptidase (Bordetella petrii (strain ATCC BAA-461 / DSM 12804 / CCUG 43448)).